The sequence spans 70 residues: Small ribosomal subunit protein bS21 (70 aa).

Belongs to the bacterial ribosomal protein bS21 family.

The polypeptide is Small ribosomal subunit protein bS21 (Delftia acidovorans (strain DSM 14801 / SPH-1)).